Consider the following 2179-residue polypeptide: Genome polyprotein (2179 aa).

The disordered stretch occupies residues Met-1 to Thr-20. Residue Gly-2 is the site of N-myristoyl glycine; by host attachment. Over Gly-2–Asn-1491 the chain is Cytoplasmic. The segment at Ala-564–Thr-584 is amphipathic alpha-helix. Residues His-876 and Asp-894 each act as for protease 2A activity in the active site. Residues Cys-911 and Cys-913 each coordinate Zn(2+). Cys-965 serves as the catalytic For protease 2A activity. Zn(2+) contacts are provided by Cys-971 and His-973. Residues Asn-1101–Arg-1173 are membrane-binding. The interval Asn-1101 to Thr-1239 is oligomerization. The RNA-binding stretch occupies residues Ala-1122–Ser-1126. Positions Lys-1205–Asn-1361 constitute an SF3 helicase domain. The Zn(2+) site is built by Cys-1369, Cys-1372, Cys-1381, and Cys-1386. A C4-type zinc finger spans residues Cys-1369–Cys-1386. The interval Asp-1413–Ile-1420 is RNA-binding. The tract at residues Leu-1424–Gln-1429 is oligomerization. Residues Thr-1492–Tyr-1507 lie within the membrane without spanning it. Residues Lys-1508–Phe-2179 are Cytoplasmic-facing. Tyr-1517 is modified (O-(5'-phospho-RNA)-tyrosine). Positions Gly-1538–Phe-1715 constitute a Peptidase C3 domain. Residues His-1577, Glu-1608, and Cys-1683 each act as for protease 3C activity in the active site. The region spanning Gly-1946 to Val-2060 is the RdRp catalytic domain. Mg(2+) is bound by residues Asp-1952 and Asp-2046.

Belongs to the picornaviruses polyprotein family. In terms of assembly, interacts with capsid protein VP1 and capsid protein VP3 to form heterotrimeric protomers. As to quaternary structure, interacts with capsid protein VP0, and capsid protein VP3 to form heterotrimeric protomers. Five protomers subsequently associate to form pentamers which serve as building blocks for the capsid. Interacts with capsid protein VP2, capsid protein VP3 and capsid protein VP4 following cleavage of capsid protein VP0. Interacts with host ICAM1. Interacts with capsid protein VP1 and capsid protein VP3 in the mature capsid. In terms of assembly, interacts with capsid protein VP0 and capsid protein VP1 to form heterotrimeric protomers. Five protomers subsequently associate to form pentamers which serve as building blocks for the capsid. Interacts with capsid protein VP4 in the mature capsid. Interacts with protein 2C; this interaction may be important for virion morphogenesis. As to quaternary structure, interacts with capsid protein VP1 and capsid protein VP3. Homodimer. In terms of assembly, homohexamer; forms a hexameric ring structure with 6-fold symmetry characteristic of AAA+ ATPases. Interacts (via N-terminus) with host RTN3 (via reticulon domain); this interaction is important for viral replication. Interacts with capsid protein VP3; this interaction may be important for virion morphogenesis. As to quaternary structure, interacts with protein 3CD. Homodimer. Interacts with host GBF1. Interacts (via GOLD domain) with host ACBD3 (via GOLD domain); this interaction allows the formation of a viral protein 3A/ACBD3 heterotetramer with a 2:2 stoichiometry, which will stimulate the recruitment of host PI4KB in order to synthesize PI4P at the viral RNA replication sites. In terms of assembly, interacts with RNA-directed RNA polymerase. As to quaternary structure, interacts with protein 3AB and with RNA-directed RNA polymerase. Interacts with Viral protein genome-linked and with protein 3CD. Mg(2+) serves as cofactor. Post-translationally, specific enzymatic cleavages in vivo by the viral proteases yield processing intermediates and the mature proteins. Myristoylation is required for the formation of pentamers during virus assembly. Further assembly of 12 pentamers and a molecule of genomic RNA generates the provirion. In terms of processing, during virion maturation, immature virions are rendered infectious following cleavage of VP0 into VP4 and VP2. This maturation seems to be an autocatalytic event triggered by the presence of RNA in the capsid and it is followed by a conformational change infectious virion. Post-translationally, myristoylation is required during RNA encapsidation and formation of the mature virus particle. VPg is uridylylated by the polymerase into VPg-pUpU. This acts as a nucleotide-peptide primer for the genomic RNA replication.

It is found in the virion. The protein resides in the host cytoplasm. The protein localises to the host cytoplasmic vesicle membrane. It localises to the host nucleus. It carries out the reaction a ribonucleoside 5'-triphosphate + H2O = a ribonucleoside 5'-diphosphate + phosphate + H(+). The catalysed reaction is Selective cleavage of Tyr-|-Gly bond in the picornavirus polyprotein.. The enzyme catalyses RNA(n) + a ribonucleoside 5'-triphosphate = RNA(n+1) + diphosphate. It catalyses the reaction Selective cleavage of Gln-|-Gly bond in the poliovirus polyprotein. In other picornavirus reactions Glu may be substituted for Gln, and Ser or Thr for Gly.. Replication or transcription is subject to high level of random mutations by the nucleotide analog ribavirin. Functionally, forms an icosahedral capsid of pseudo T=3 symmetry with capsid proteins VP2 and VP3. The capsid is 300 Angstroms in diameter, composed of 60 copies of each capsid protein and enclosing the viral positive strand RNA genome. Capsid protein VP1 mainly forms the vertices of the capsid. Capsid protein VP1 interacts with host ICAM1 to provide virion attachment to target host cells. This attachment induces virion internalization. Tyrosine kinases are probably involved in the entry process. After binding to its receptor, the capsid undergoes conformational changes. Capsid protein VP1 N-terminus (that contains an amphipathic alpha-helix) and capsid protein VP4 are externalized. Together, they shape a pore in the host membrane through which viral genome is translocated to host cell cytoplasm. After genome has been released, the channel shrinks. In terms of biological role, forms an icosahedral capsid of pseudo T=3 symmetry with capsid proteins VP2 and VP3. The capsid is 300 Angstroms in diameter, composed of 60 copies of each capsid protein and enclosing the viral positive strand RNA genome. Lies on the inner surface of the capsid shell. After binding to the host receptor, the capsid undergoes conformational changes. Capsid protein VP4 is released, Capsid protein VP1 N-terminus is externalized, and together, they shape a pore in the host membrane through which the viral genome is translocated into the host cell cytoplasm. Its function is as follows. Component of immature procapsids, which is cleaved into capsid proteins VP4 and VP2 after maturation. Allows the capsid to remain inactive before the maturation step. Functionally, cysteine protease that cleaves viral polyprotein and specific host proteins. It is responsible for the autocatalytic cleavage between the P1 and P2 regions, which is the first cleavage occurring in the polyprotein. Also cleaves the host translation initiation factor EIF4G1, in order to shut down the capped cellular mRNA translation. Inhibits the host nucleus-cytoplasm protein and RNA trafficking by cleaving host members of the nuclear pores including NUP62 and NUP153. Counteracts stress granule formation probably by antagonizing its assembly or promoting its dissassembly. In terms of biological role, plays an essential role in the virus replication cycle by acting as a viroporin. Creates a pore in the host endoplasmic reticulum and as a consequence releases Ca2+ in the cytoplasm of infected cell. In turn, high levels of cytoplasmic calcium may trigger membrane trafficking and transport of viral ER-associated proteins to viroplasms, sites of viral genome replication. Induces and associates with structural rearrangements of intracellular membranes. Displays RNA-binding, nucleotide binding and NTPase activities. May play a role in virion morphogenesis and viral RNA encapsidation by interacting with the capsid protein VP3. Its function is as follows. Localizes the viral replication complex to the surface of membranous vesicles. Together with protein 3CD binds the Cis-Active RNA Element (CRE) which is involved in RNA synthesis initiation. Acts as a cofactor to stimulate the activity of 3D polymerase, maybe through a nucleid acid chaperone activity. Functionally, localizes the viral replication complex to the surface of membranous vesicles. It inhibits host cell endoplasmic reticulum-to-Golgi apparatus transport and causes the disassembly of the Golgi complex, possibly through GBF1 interaction. This would result in depletion of MHC, trail receptors and IFN receptors at the host cell surface. Plays an essential role in viral RNA replication by recruiting ACBD3 and PI4KB at the viral replication sites, thereby allowing the formation of the rearranged membranous structures where viral replication takes place. In terms of biological role, acts as a primer for viral RNA replication and remains covalently bound to viral genomic RNA. VPg is uridylylated prior to priming replication into VPg-pUpU. The oriI viral genomic sequence may act as a template for this. The VPg-pUpU is then used as primer on the genomic RNA poly(A) by the RNA-dependent RNA polymerase to replicate the viral genome. During genome replication, the VPg-RNA linkage is removed by the host TDP2, thereby accelerating replication. During the late stage of the replication cycle, host TDP2 is excluded from sites of viral RNA synthesis and encapsidation, allowing for the generation of progeny virions. Involved in the viral replication complex and viral polypeptide maturation. It exhibits protease activity with a specificity and catalytic efficiency that is different from protease 3C. Protein 3CD lacks polymerase activity. Protein 3CD binds to the 5'UTR of the viral genome. Its function is as follows. Major viral protease that mediates proteolytic processing of the polyprotein. Cleaves host EIF5B, contributing to host translation shutoff. Cleaves also host PABPC1, contributing to host translation shutoff. Cleaves host NLRP1, triggers host N-glycine-mediated degradation of the autoinhibitory NLRP1 N-terminal fragment. Functionally, replicates the viral genomic RNA on the surface of intracellular membranes. May form linear arrays of subunits that propagate along a strong head-to-tail interaction called interface-I. Covalently attaches UMP to a tyrosine of VPg, which is used to prime RNA synthesis. The positive stranded RNA genome is first replicated at virus induced membranous vesicles, creating a dsRNA genomic replication form. This dsRNA is then used as template to synthesize positive stranded RNA genomes. ss(+)RNA genomes are either translated, replicated or encapsidated. The protein is Genome polyprotein of Homo sapiens (Human).